The chain runs to 436 residues: UPF0597 protein YhaM (436 aa).

It belongs to the UPF0597 family.

The sequence is that of UPF0597 protein YhaM from Salmonella choleraesuis (strain SC-B67).